The following is a 451-amino-acid chain: Phosphoglucosamine mutase (451 aa).

The active-site Phosphoserine intermediate is the Ser-102. Residues Ser-102, Asp-242, Asp-244, and Asp-246 each contribute to the Mg(2+) site. Ser-102 carries the phosphoserine modification.

The protein belongs to the phosphohexose mutase family. Mg(2+) is required as a cofactor. Activated by phosphorylation.

The enzyme catalyses alpha-D-glucosamine 1-phosphate = D-glucosamine 6-phosphate. Functionally, catalyzes the conversion of glucosamine-6-phosphate to glucosamine-1-phosphate. The polypeptide is Phosphoglucosamine mutase (Staphylococcus saprophyticus subsp. saprophyticus (strain ATCC 15305 / DSM 20229 / NCIMB 8711 / NCTC 7292 / S-41)).